Reading from the N-terminus, the 489-residue chain is Rhamnulokinase (489 aa).

Residue 13-17 (ASSGR) participates in ATP binding. Cys68 and Cys222 are oxidised to a cystine. Substrate-binding positions include Gly83 and 236–238 (HDT). Asp237 functions as the Proton acceptor in the catalytic mechanism. ATP is bound at residue Thr259. Asn296 provides a ligand contact to substrate. Residue Gln304 participates in ATP binding. Cys353 and Cys370 are disulfide-bonded. Gly402 lines the ATP pocket. Cys413 and Cys417 form a disulfide bridge.

The protein belongs to the rhamnulokinase family. In terms of assembly, monomer. Requires Mg(2+) as cofactor.

The catalysed reaction is L-rhamnulose + ATP = L-rhamnulose 1-phosphate + ADP + H(+). It functions in the pathway carbohydrate degradation; L-rhamnose degradation; glycerone phosphate from L-rhamnose: step 2/3. In terms of biological role, involved in the catabolism of L-rhamnose (6-deoxy-L-mannose). Catalyzes the transfer of the gamma-phosphate group from ATP to the 1-hydroxyl group of L-rhamnulose to yield L-rhamnulose 1-phosphate. This Escherichia coli O7:K1 (strain IAI39 / ExPEC) protein is Rhamnulokinase.